The following is a 603-amino-acid chain: Elongation factor 4 (603 aa).

Residues 7–189 (SHIRNFSIIA…SIVHLVPPPR (183 aa)) enclose the tr-type G domain. Residues 19 to 24 (DHGKST) and 136 to 139 (NKID) each bind GTP.

It belongs to the TRAFAC class translation factor GTPase superfamily. Classic translation factor GTPase family. LepA subfamily.

It localises to the cell inner membrane. The catalysed reaction is GTP + H2O = GDP + phosphate + H(+). Functionally, required for accurate and efficient protein synthesis under certain stress conditions. May act as a fidelity factor of the translation reaction, by catalyzing a one-codon backward translocation of tRNAs on improperly translocated ribosomes. Back-translocation proceeds from a post-translocation (POST) complex to a pre-translocation (PRE) complex, thus giving elongation factor G a second chance to translocate the tRNAs correctly. Binds to ribosomes in a GTP-dependent manner. This Thermosynechococcus vestitus (strain NIES-2133 / IAM M-273 / BP-1) protein is Elongation factor 4.